Reading from the N-terminus, the 178-residue chain is Ribosome maturation factor RimM (178 aa).

The PRC barrel domain maps to 98–178 (DGEYYWNQLE…RILVDWDPEF (81 aa)).

Belongs to the RimM family. In terms of assembly, binds ribosomal protein uS19.

The protein resides in the cytoplasm. Its function is as follows. An accessory protein needed during the final step in the assembly of 30S ribosomal subunit, possibly for assembly of the head region. Essential for efficient processing of 16S rRNA. May be needed both before and after RbfA during the maturation of 16S rRNA. It has affinity for free ribosomal 30S subunits but not for 70S ribosomes. This Cellvibrio japonicus (strain Ueda107) (Pseudomonas fluorescens subsp. cellulosa) protein is Ribosome maturation factor RimM.